A 484-amino-acid polypeptide reads, in one-letter code: MSGNNLIALAQDQFKYLFLGSYFDLKDFSHVPAEAKAFIGNYLDCNFRVLDDATLQNYTGYLRSIQLRHMVGGLLTPDVYKFIKPQFRFVCDRATVDILEFDSRMYIKPGTPVYATNLFTSNPRKMTSFIYSEFTKVYKNRLFANTTNHGCVLAGAAGFVFEDAYVDWSGVRMCAAPRLDNNRHPFRLYLLGEEMAAHFVAHNILPPHPANAARVNNSMFMLKNFYKGLPLYRLQYQVVNSMKFTTRKPNRVFDEIDKELNSHSPFVKLIQRDYIYDAQFPPDLLEVLNEYMTRSSFMKFITKFAIEENASANDMLREVVFDRYAVDCYRKLYIKMELTNVFPAMYDNESAYLFINKDLLQLTGTLNAFYAPKLRILSILSVNRLFGATKTLDYHPNLLVYRQSSPPVRLTGDVYAVDKGKKIFLVKHTFSNTVPAYLLVRGDYESTSELKSLRDLNPWVQNTLLELLIVDDPSVAAHTAKNSK.

This is an uncharacterized protein from Orgyia pseudotsugata multicapsid polyhedrosis virus (OpMNPV).